We begin with the raw amino-acid sequence, 185 residues long: RING-H2 finger protein ATL8 (185 aa).

Residues leucine 28–valine 48 form a helical membrane-spanning segment. The segment at cysteine 104 to arginine 146 adopts an RING-type; atypical zinc-finger fold. The interval proline 161 to proline 185 is disordered. The segment covering proline 170 to proline 185 has biased composition (basic and acidic residues).

This sequence belongs to the RING-type zinc finger family. ATL subfamily.

It localises to the membrane. The enzyme catalyses S-ubiquitinyl-[E2 ubiquitin-conjugating enzyme]-L-cysteine + [acceptor protein]-L-lysine = [E2 ubiquitin-conjugating enzyme]-L-cysteine + N(6)-ubiquitinyl-[acceptor protein]-L-lysine.. The protein operates within protein modification; protein ubiquitination. This chain is RING-H2 finger protein ATL8 (ATL8), found in Arabidopsis thaliana (Mouse-ear cress).